Here is a 432-residue protein sequence, read N- to C-terminus: Anaerobic glycerol-3-phosphate dehydrogenase subunit B (432 aa).

It belongs to the anaerobic G-3-P dehydrogenase subunit B family. Composed of a catalytic GlpA/B dimer and of membrane bound GlpC. The cofactor is FMN.

It catalyses the reaction a quinone + sn-glycerol 3-phosphate = dihydroxyacetone phosphate + a quinol. The protein operates within polyol metabolism; glycerol degradation via glycerol kinase pathway; glycerone phosphate from sn-glycerol 3-phosphate (anaerobic route): step 1/1. Conversion of glycerol 3-phosphate to dihydroxyacetone. Uses fumarate or nitrate as electron acceptor. This is Anaerobic glycerol-3-phosphate dehydrogenase subunit B from Histophilus somni (strain 129Pt) (Haemophilus somnus).